We begin with the raw amino-acid sequence, 438 residues long: GTPase Der (438 aa).

EngA-type G domains lie at 4–168 (PVVA…DDNS) and 177–352 (TKVC…NNYS). GTP contacts are provided by residues 10-17 (GRANVGKS), 57-61 (DTGGL), 120-123 (NKID), 183-190 (GKPNVGKS), 230-234 (DTAGL), and 295-298 (NKWD). Residues 353-437 (MRISTGVLND…PLQFEFKTRG (85 aa)) form the KH-like domain.

The protein belongs to the TRAFAC class TrmE-Era-EngA-EngB-Septin-like GTPase superfamily. EngA (Der) GTPase family. In terms of assembly, associates with the 50S ribosomal subunit.

Its function is as follows. GTPase that plays an essential role in the late steps of ribosome biogenesis. The protein is GTPase Der of Finegoldia magna (strain ATCC 29328 / DSM 20472 / WAL 2508) (Peptostreptococcus magnus).